A 594-amino-acid polypeptide reads, in one-letter code: Arrestin domain-containing protein C584.15c (594 aa).

Residues 368–398 (NPQLQSGFTTPNLSRRNSSDFGPNSPVNIHS) are compositionally biased toward polar residues. Disordered stretches follow at residues 368–417 (NPQL…NSNA) and 531–594 (EATR…RGVR). A compositionally biased stretch (low complexity) spans 404–417 (SGQQPSSPASNSNA). The span at 534 to 552 (RPSSPTESVEIPSNTTTIA) shows a compositional bias: polar residues. The segment covering 565–574 (PSTPAPPLPS) has biased composition (pro residues). S584 is subject to Phosphoserine.

The protein belongs to the arrestin family.

The chain is Arrestin domain-containing protein C584.15c from Schizosaccharomyces pombe (strain 972 / ATCC 24843) (Fission yeast).